The following is a 128-amino-acid chain: Probable 4-amino-4-deoxy-L-arabinose-phosphoundecaprenol flippase subunit ArnF (128 aa).

Residues M1–G2 lie on the Cytoplasmic side of the membrane. A helical transmembrane segment spans residues L3–A23. Over A24–D35 the chain is Periplasmic. A helical membrane pass occupies residues F36–G56. Residues Y57–A76 lie on the Cytoplasmic side of the membrane. The chain crosses the membrane as a helical span at residues Y77–W97. The Periplasmic segment spans residues E98–T100. A helical membrane pass occupies residues F101–L121. At P122–Y128 the chain is on the cytoplasmic side.

The protein belongs to the ArnF family. Heterodimer of ArnE and ArnF.

It is found in the cell inner membrane. It participates in bacterial outer membrane biogenesis; lipopolysaccharide biosynthesis. Its function is as follows. Translocates 4-amino-4-deoxy-L-arabinose-phosphoundecaprenol (alpha-L-Ara4N-phosphoundecaprenol) from the cytoplasmic to the periplasmic side of the inner membrane. In Escherichia coli O45:K1 (strain S88 / ExPEC), this protein is Probable 4-amino-4-deoxy-L-arabinose-phosphoundecaprenol flippase subunit ArnF.